Here is a 323-residue protein sequence, read N- to C-terminus: Cytochrome c biogenesis protein CcsA (323 aa).

8 helical membrane-spanning segments follow: residues 9-29 (ILTH…LLNL), 45-62 (MMAT…RWIY), 71-91 (LYES…VPYF), 98-118 (LSAI…SGLL), 143-163 (MLLG…LLVI), 227-247 (IISL…VWAN), 261-275 (TWAF…IYLH), and 285-305 (VGPA…YFGV).

This sequence belongs to the CcmF/CycK/Ccl1/NrfE/CcsA family. In terms of assembly, may interact with Ccs1.

Its subcellular location is the plastid. The protein resides in the chloroplast thylakoid membrane. In terms of biological role, required during biogenesis of c-type cytochromes (cytochrome c6 and cytochrome f) at the step of heme attachment. This is Cytochrome c biogenesis protein CcsA from Calycanthus floridus var. glaucus (Eastern sweetshrub).